Reading from the N-terminus, the 184-residue chain is Elongation factor P (184 aa).

This sequence belongs to the elongation factor P family.

It is found in the cytoplasm. It functions in the pathway protein biosynthesis; polypeptide chain elongation. Functionally, involved in peptide bond synthesis. Stimulates efficient translation and peptide-bond synthesis on native or reconstituted 70S ribosomes in vitro. Probably functions indirectly by altering the affinity of the ribosome for aminoacyl-tRNA, thus increasing their reactivity as acceptors for peptidyl transferase. This chain is Elongation factor P, found in Acidovorax ebreus (strain TPSY) (Diaphorobacter sp. (strain TPSY)).